A 160-amino-acid chain; its full sequence is Cathelin-related peptide SC5 (160 aa).

The N-terminal stretch at 1 to 29 (METQRASLSLGRRSLWLLLLGLVLASASA) is a signal peptide. Residues 30 to 131 (QALSYREAVL…DITCAEPQSV (102 aa)) constitute a propeptide that is removed on maturation. 2 disulfides stabilise this stretch: cysteine 86–cysteine 97 and cysteine 108–cysteine 125.

The protein belongs to the cathelicidin family.

It is found in the secreted. Broad spectrum bactericidal agent. The protein is Cathelin-related peptide SC5 of Ovis aries (Sheep).